A 149-amino-acid chain; its full sequence is Large ribosomal subunit protein bL9 (149 aa).

This sequence belongs to the bacterial ribosomal protein bL9 family.

Its function is as follows. Binds to the 23S rRNA. This chain is Large ribosomal subunit protein bL9, found in Legionella pneumophila subsp. pneumophila (strain Philadelphia 1 / ATCC 33152 / DSM 7513).